The primary structure comprises 1284 residues: Peroxisomal ATPase PEX1 (1284 aa).

The segment at 339–373 is disordered; sequence SPKQQQDKSKQGVLLPDKEKQLSKSPDHKQISSNR. Residues 343–373 are compositionally biased toward basic and acidic residues; it reads QQDKSKQGVLLPDKEKQLSKSPDHKQISSNR. ATP contacts are provided by residues 600–607 and 882–889; these read GGKGSGKS and GPPGTGKT. A phosphoserine mark is found at serine 1182, serine 1210, and serine 1212. The disordered stretch occupies residues 1261–1284; it reads FQNPKKRKNQSGTVFRTGQKVTLA. Positions 1270-1284 are enriched in polar residues; that stretch reads QSGTVFRTGQKVTLA.

This sequence belongs to the AAA ATPase family. As to quaternary structure, homooligomer; homooligomerizes in the cytosol, interaction with PEX6 promotes dissociation of the homooligomer. Interacts with PEX6; forming the PEX1-PEX6 AAA ATPase complex, which is composed of a heterohexamer formed by a trimer of PEX1-PEX6 dimers. Interacts indirectly with PEX26, via its interaction with PEX6.

Its subcellular location is the cytoplasm. The protein localises to the cytosol. It is found in the peroxisome membrane. The enzyme catalyses ATP + H2O = ADP + phosphate + H(+). Its function is as follows. Component of the PEX1-PEX6 AAA ATPase complex, a protein dislocase complex that mediates the ATP-dependent extraction of the PEX5 receptor from peroxisomal membranes, an essential step for PEX5 recycling. Specifically recognizes PEX5 monoubiquitinated at 'Cys-11', and pulls it out of the peroxisome lumen through the PEX2-PEX10-PEX12 retrotranslocation channel. Extraction by the PEX1-PEX6 AAA ATPase complex is accompanied by unfolding of the TPR repeats and release of bound cargo from PEX5. The chain is Peroxisomal ATPase PEX1 from Mus musculus (Mouse).